We begin with the raw amino-acid sequence, 544 residues long: Chromosomal replication initiator protein DnaA (544 aa).

The segment at 1 to 71 (MNDFWQHCSA…ADMARDFWHT (71 aa)) is domain I, interacts with DnaA modulators. The domain II stretch occupies residues 71–207 (TPIDVQFVLD…GETDSMYERS (137 aa)). Over residues 90–105 (AAAPAPASARPASAPG) the composition is skewed to low complexity. Disordered stretches follow at residues 90-111 (AAAP…GGSA) and 180-203 (AAAR…TDSM). The span at 191 to 200 (SAGSNGNGET) shows a compositional bias: polar residues. Residues 208-424 (KLNPVLTFDN…GALRKILAYS (217 aa)) are domain III, AAA+ region. The ATP site is built by glycine 252, glycine 254, lysine 255, and threonine 256. The domain IV, binds dsDNA stretch occupies residues 425–544 (KFHGREITIE…LHVLEQTLKG (120 aa)).

It belongs to the DnaA family. As to quaternary structure, oligomerizes as a right-handed, spiral filament on DNA at oriC.

The protein resides in the cytoplasm. In terms of biological role, plays an essential role in the initiation and regulation of chromosomal replication. ATP-DnaA binds to the origin of replication (oriC) to initiate formation of the DNA replication initiation complex once per cell cycle. Binds the DnaA box (a 9 base pair repeat at the origin) and separates the double-stranded (ds)DNA. Forms a right-handed helical filament on oriC DNA; dsDNA binds to the exterior of the filament while single-stranded (ss)DNA is stabiized in the filament's interior. The ATP-DnaA-oriC complex binds and stabilizes one strand of the AT-rich DNA unwinding element (DUE), permitting loading of DNA polymerase. After initiation quickly degrades to an ADP-DnaA complex that is not apt for DNA replication. Binds acidic phospholipids. This is Chromosomal replication initiator protein DnaA from Paraburkholderia xenovorans (strain LB400).